Here is a 1295-residue protein sequence, read N- to C-terminus: Phosphoribosylformylglycinamidine synthase (1295 aa).

The tract at residues 305-327 (WPGAATGSGGEIRDEGATGRGAK) is disordered. ATP-binding positions include 307 to 318 (GAATGSGGEIRD), 386 to 388 (TGY), and A678. Mg(2+) contacts are provided by D679, E718, N722, and D884. Residue S886 participates in ATP binding. The region spanning 1042–1295 (VAVLREQGVN…IFRNARKQLG (254 aa)) is the Glutamine amidotransferase type-1 domain. The Nucleophile role is filled by C1135. Catalysis depends on residues H1260 and E1262.

In the N-terminal section; belongs to the FGAMS family. As to quaternary structure, monomer.

It is found in the cytoplasm. The enzyme catalyses N(2)-formyl-N(1)-(5-phospho-beta-D-ribosyl)glycinamide + L-glutamine + ATP + H2O = 2-formamido-N(1)-(5-O-phospho-beta-D-ribosyl)acetamidine + L-glutamate + ADP + phosphate + H(+). It participates in purine metabolism; IMP biosynthesis via de novo pathway; 5-amino-1-(5-phospho-D-ribosyl)imidazole from N(2)-formyl-N(1)-(5-phospho-D-ribosyl)glycinamide: step 1/2. Phosphoribosylformylglycinamidine synthase involved in the purines biosynthetic pathway. Catalyzes the ATP-dependent conversion of formylglycinamide ribonucleotide (FGAR) and glutamine to yield formylglycinamidine ribonucleotide (FGAM) and glutamate. This is Phosphoribosylformylglycinamidine synthase from Salmonella typhimurium (strain LT2 / SGSC1412 / ATCC 700720).